The chain runs to 327 residues: Fructose import binding protein FruE (327 aa).

Residues 1 to 22 form the signal peptide; the sequence is MKNWKKAIALVASAAALVSVAA. Cys23 is lipidated: N-palmitoyl cysteine. Residue Cys23 is the site of S-diacylglycerol cysteine attachment.

The protein belongs to the bacterial solute-binding protein 2 family. As to quaternary structure, the complex is composed of an ATP-binding protein (FruK), two transmembrane proteins (FruF and FruG) and a solute-binding protein (FruE).

The protein localises to the cell membrane. Its function is as follows. Part of the high-affinity ABC transporter complex FruEKFG involved in fructose uptake. Can also transport ribose and xylose, with lower affinity. Binds fructose, ribose and xylose, with fructose as the preferred substrate. The chain is Fructose import binding protein FruE from Bifidobacterium longum (strain NCC 2705).